The following is a 339-amino-acid chain: Homeobox protein Hox-D13 (339 aa).

Positions Met-1–Pro-33 are disordered. Low complexity predominate over residues Gly-20–Pro-33. Positions Gly-272–Val-331 form a DNA-binding region, homeobox.

Belongs to the Abd-B homeobox family.

The protein localises to the nucleus. Sequence-specific transcription factor that binds gene promoters and activates their transcription. Part of a developmental regulatory system that provides cells with specific positional identities on the anterior-posterior axis. The polypeptide is Homeobox protein Hox-D13 (Hoxd13) (Mus musculus (Mouse)).